A 300-amino-acid chain; its full sequence is Mitochondrial carnitine/acylcarnitine carrier-like protein (300 aa).

3 Solcar repeats span residues 2 to 93 (ADAW…MEGL), 102 to 201 (LTIS…FKRF), and 211 to 298 (LGQG…TRSS). A run of 6 helical transmembrane segments spans residues 8-28 (LASG…FDTI), 64-84 (GLYK…AVLF), 108-128 (FVAG…TELI), 176-195 (GLFP…FAAY), 211-231 (LGQG…WGIV), and 273-292 (GFGP…FLAY).

The protein belongs to the mitochondrial carrier (TC 2.A.29) family. High expression in cotyledons, leaves, flowers and developing siliques. Lower expression in roots and maturing siliques. Not detected in meristematic tissues.

It localises to the mitochondrion inner membrane. Functionally, involved in photorespiratory metabolism. Acts probably as a carrier for a glycine decarboxylase (GDC) cofactor or, alternatively, may act as a mitochondrial glycine shuttle. Involved in the transition from the embryonic stage to the juvenile autotrophic stage. The sequence is that of Mitochondrial carnitine/acylcarnitine carrier-like protein (BOU) from Arabidopsis thaliana (Mouse-ear cress).